A 121-amino-acid chain; its full sequence is Lysozyme (121 aa).

Residues 1-121 (KTFTRCELVQ…NKPLPDISKC (121 aa)) enclose the C-type lysozyme domain. 4 cysteine pairs are disulfide-bonded: Cys6-Cys121, Cys27-Cys110, Cys62-Cys76, and Cys72-Cys90. Residues Glu32 and Asp50 contribute to the active site.

Belongs to the glycosyl hydrolase 22 family.

It carries out the reaction Hydrolysis of (1-&gt;4)-beta-linkages between N-acetylmuramic acid and N-acetyl-D-glucosamine residues in a peptidoglycan and between N-acetyl-D-glucosamine residues in chitodextrins.. Its function is as follows. Lysozymes have primarily a bacteriolytic function; those in tissues and body fluids are associated with the monocyte-macrophage system and enhance the activity of immunoagents. The protein is Lysozyme of Galleria mellonella (Greater wax moth).